Here is a 227-residue protein sequence, read N- to C-terminus: Response regulator protein TodT (227 aa).

A Response regulatory domain is found at 28 to 142 (VIYILDDDNA…ELLGAIRAAL (115 aa)). The residue at position 77 (Asp77) is a 4-aspartylphosphate. Residues 158-223 (LKENYESLSK…DLVRVTERLK (66 aa)) form the HTH luxR-type domain. A DNA-binding region (H-T-H motif) is located at residues 182-201 (NKQTALELDISEATVKVHRH).

Phosphorylated by TodS.

It localises to the cytoplasm. Its function is as follows. Member of the two-component regulatory system TodS/TodT involved in the regulation of toluene degradation. Phosphorylated TodT activates transcription of the tod operon (todXFC1C2BADEGIH). Binds specifically to a 6-bp palindromic DNA structure in the tod promoter region. In Pseudomonas putida (strain ATCC 700007 / DSM 6899 / JCM 31910 / BCRC 17059 / LMG 24140 / F1), this protein is Response regulator protein TodT (todT).